A 159-amino-acid chain; its full sequence is Peptide deformylase (159 aa).

2 residues coordinate Fe cation: C88 and H130. The active site involves E131. H134 lines the Fe cation pocket.

It belongs to the polypeptide deformylase family. Fe(2+) serves as cofactor.

It catalyses the reaction N-terminal N-formyl-L-methionyl-[peptide] + H2O = N-terminal L-methionyl-[peptide] + formate. Removes the formyl group from the N-terminal Met of newly synthesized proteins. Requires at least a dipeptide for an efficient rate of reaction. N-terminal L-methionine is a prerequisite for activity but the enzyme has broad specificity at other positions. The protein is Peptide deformylase of Thermoanaerobacter pseudethanolicus (strain ATCC 33223 / 39E) (Clostridium thermohydrosulfuricum).